The chain runs to 824 residues: Translation initiation factor IF-2 (824 aa).

Disordered regions lie at residues 1–32 (MSDT…GRTK) and 45–232 (VPKA…MGGQ). The span at 45–57 (VPKAGATTSAGGK) shows a compositional bias: low complexity. Basic and acidic residues predominate over residues 86 to 144 (KAREAEEEAARIAEEKARAEERERRRAEQEERERAEREREESLKAKAEEDKRRKDEAEA). The span at 145–167 (AAKAAAAPAAEPVVQRPAAKAAP) shows a compositional bias: low complexity. A compositionally biased stretch (basic and acidic residues) spans 170–193 (APRKQQDRDRDNKRGGKGNDDSRR). One can recognise a tr-type G domain in the interval 321–489 (TRPPVVTIMG…AIALQAEILE (169 aa)). Positions 330–337 (GHVDHGKT) are G1. 330–337 (GHVDHGKT) contributes to the GTP binding site. The G2 stretch occupies residues 355–359 (GITQH). Residues 377–380 (DTPG) are G3. GTP is bound by residues 377-381 (DTPGH) and 431-434 (NKID). Residues 431-434 (NKID) form a G4 region. The tract at residues 467–469 (SAI) is G5.

This sequence belongs to the TRAFAC class translation factor GTPase superfamily. Classic translation factor GTPase family. IF-2 subfamily.

It is found in the cytoplasm. In terms of biological role, one of the essential components for the initiation of protein synthesis. Protects formylmethionyl-tRNA from spontaneous hydrolysis and promotes its binding to the 30S ribosomal subunits. Also involved in the hydrolysis of GTP during the formation of the 70S ribosomal complex. In Roseobacter denitrificans (strain ATCC 33942 / OCh 114) (Erythrobacter sp. (strain OCh 114)), this protein is Translation initiation factor IF-2.